Here is a 293-residue protein sequence, read N- to C-terminus: Fructose-bisphosphate aldolase (293 aa).

Serine 50 serves as a coordination point for D-glyceraldehyde 3-phosphate. Catalysis depends on aspartate 85, which acts as the Proton donor. Histidine 86, aspartate 106, glutamate 136, and histidine 178 together coordinate Zn(2+). Dihydroxyacetone phosphate is bound at residue glycine 179. Histidine 208 serves as a coordination point for Zn(2+). Residues 209 to 211 and 230 to 233 contribute to the dihydroxyacetone phosphate site; these read GGS and NVNT.

It belongs to the class II fructose-bisphosphate aldolase family. Zn(2+) is required as a cofactor.

The enzyme catalyses beta-D-fructose 1,6-bisphosphate = D-glyceraldehyde 3-phosphate + dihydroxyacetone phosphate. It functions in the pathway carbohydrate degradation; glycolysis; D-glyceraldehyde 3-phosphate and glycerone phosphate from D-glucose: step 4/4. Its function is as follows. Catalyzes the aldol condensation of dihydroxyacetone phosphate (DHAP or glycerone-phosphate) with glyceraldehyde 3-phosphate (G3P) to form fructose 1,6-bisphosphate (FBP) in gluconeogenesis and the reverse reaction in glycolysis. The protein is Fructose-bisphosphate aldolase (fba) of Streptococcus pneumoniae serotype 4 (strain ATCC BAA-334 / TIGR4).